A 418-amino-acid chain; its full sequence is UDP-N-acetylglucosamine 1-carboxyvinyltransferase (418 aa).

Residue 22-23 coordinates phosphoenolpyruvate; the sequence is KN. Position 93 (Arg-93) interacts with UDP-N-acetyl-alpha-D-glucosamine. The Proton donor role is filled by Cys-117. A 2-(S-cysteinyl)pyruvic acid O-phosphothioketal modification is found at Cys-117. UDP-N-acetyl-alpha-D-glucosamine-binding residues include Asp-306 and Ile-328.

The protein belongs to the EPSP synthase family. MurA subfamily.

Its subcellular location is the cytoplasm. The catalysed reaction is phosphoenolpyruvate + UDP-N-acetyl-alpha-D-glucosamine = UDP-N-acetyl-3-O-(1-carboxyvinyl)-alpha-D-glucosamine + phosphate. The protein operates within cell wall biogenesis; peptidoglycan biosynthesis. Its function is as follows. Cell wall formation. Adds enolpyruvyl to UDP-N-acetylglucosamine. The sequence is that of UDP-N-acetylglucosamine 1-carboxyvinyltransferase from Hydrogenovibrio crunogenus (strain DSM 25203 / XCL-2) (Thiomicrospira crunogena).